We begin with the raw amino-acid sequence, 751 residues long: Disintegrin and metalloproteinase domain-containing protein 2 (751 aa).

The N-terminal stretch at 1-16 is a signal peptide; the sequence is MLRVLFLLCGLSGLRT. A propeptide spanning residues 17–173 is cleaved from the precursor; the sequence is KENSERLHVQ…PYKVQSVQPR (157 aa). Topologically, residues 17-702 are extracellular; sequence KENSERLHVQ…DVYQTAKPTR (686 aa). N122, N147, N219, and N289 each carry an N-linked (GlcNAc...) asparagine glycan. Residues 177 to 374 form the Peptidase M12B domain; it reads QYIEMHVVVE…QKSQCLQNLP (198 aa). Cystine bridges form between C286/C369, C328/C353, and C330/C335. 5 N-linked (GlcNAc...) asparagine glycosylation sites follow: N352, N434, N458, N559, and N566. Residues 383–472 form the Disintegrin domain; that stretch reads DAVCGNSIVE…LCPDDIVIQN (90 aa). C444 and C464 are oxidised to a cystine. The EGF-like domain occupies 612–645; it reads VNLGCTLQNCNNQGICNSLQHCHCNPTFLPPNCS. Cystine bridges form between C616–C627, C621–C633, and C635–C644. N643 is a glycosylation site (N-linked (GlcNAc...) asparagine). The chain crosses the membrane as a helical span at residues 703–723; sequence WPFFLLIPFFIILGALIAILV. The Cytoplasmic segment spans residues 724–751; sequence KVQFQRKKWKTEDYTSDEQFESDSELKE. S745 carries the phosphoserine modification.

As to quaternary structure, heterodimer with ADAM1/fertilin subunit alpha. The signal and the metalloprotease domain are cleaved during the epididymal maturation of the spermatozoa. As to expression, expressed specifically in testis.

The protein localises to the membrane. Functionally, sperm surface membrane protein that may be involved in sperm-egg plasma membrane adhesion and fusion during fertilization. Could have a direct role in sperm-zona binding or migration of sperm from the uterus into the oviduct. Interactions with egg membrane could be mediated via binding between its disintegrin-like domain to one or more integrins receptors on the egg. This is a non catalytic metalloprotease-like protein. In Oryctolagus cuniculus (Rabbit), this protein is Disintegrin and metalloproteinase domain-containing protein 2 (ADAM2).